The sequence spans 429 residues: Glycine betaine monooxygenase oxygenase subunit (429 aa).

In terms of domain architecture, Rieske spans 56 to 163 (WLIAGMTCEI…VKTAGGYIFI (108 aa)). [2Fe-2S] cluster contacts are provided by Cys98, His100, Cys118, and His121. The Fe cation site is built by His217 and His222.

It belongs to the bacterial ring-hydroxylating dioxygenase alpha subunit family. The system is composed of an oxygenase subunit (GbcA) and a reductase subunit (GbcB). [2Fe-2S] cluster serves as cofactor. The cofactor is Fe cation.

The catalysed reaction is glycine betaine + NADH + O2 + H(+) = N,N-dimethylglycine + formaldehyde + NAD(+) + H2O. Involved in degradation of glycine betaine. Part of a Rieske-type oxygenase system that catalyzes the conversion of glycine betaine (GB) to dimethylglycine (DMG). This subunit is the terminal oxygenase component of the system. Required for growth on choline and GB, but not for growth on DMG. The sequence is that of Glycine betaine monooxygenase oxygenase subunit from Pseudomonas aeruginosa (strain ATCC 15692 / DSM 22644 / CIP 104116 / JCM 14847 / LMG 12228 / 1C / PRS 101 / PAO1).